Reading from the N-terminus, the 347-residue chain is Isopentenyl-diphosphate delta-isomerase (347 aa).

A substrate-binding site is contributed by arginine 9–lysine 10. FMN-binding positions include serine 67, serine 68–threonine 70, serine 98, and asparagine 127. Serine 98–arginine 100 is a binding site for substrate. Substrate is bound at residue glutamine 162. Glutamate 163 provides a ligand contact to Mg(2+). FMN is bound by residues lysine 194, threonine 224, glycine 274–lysine 276, and alanine 295–alanine 296.

The protein belongs to the IPP isomerase type 2 family. As to quaternary structure, homooctamer. Dimer of tetramers. The cofactor is FMN. NADPH serves as cofactor. It depends on Mg(2+) as a cofactor.

Its subcellular location is the cytoplasm. It catalyses the reaction isopentenyl diphosphate = dimethylallyl diphosphate. Functionally, involved in the biosynthesis of isoprenoids. Catalyzes the 1,3-allylic rearrangement of the homoallylic substrate isopentenyl (IPP) to its allylic isomer, dimethylallyl diphosphate (DMAPP). The chain is Isopentenyl-diphosphate delta-isomerase from Pseudescherichia vulneris (Escherichia vulneris).